Reading from the N-terminus, the 151-residue chain is Small ribosomal subunit protein uS15 (151 aa).

The protein belongs to the universal ribosomal protein uS15 family.

The sequence is that of Small ribosomal subunit protein uS15 (RpS13) from Anopheles gambiae (African malaria mosquito).